Reading from the N-terminus, the 494-residue chain is Glutamate--tRNA ligase (494 aa).

Positions 9 to 19 (PSPTGDPHLGT) match the 'HIGH' region motif. A 'KMSKS' region motif is present at residues 250-254 (KLSKR). An ATP-binding site is contributed by K253.

The protein belongs to the class-I aminoacyl-tRNA synthetase family. Glutamate--tRNA ligase type 1 subfamily. As to quaternary structure, monomer.

The protein localises to the cytoplasm. It carries out the reaction tRNA(Glu) + L-glutamate + ATP = L-glutamyl-tRNA(Glu) + AMP + diphosphate. Catalyzes the attachment of glutamate to tRNA(Glu) in a two-step reaction: glutamate is first activated by ATP to form Glu-AMP and then transferred to the acceptor end of tRNA(Glu). This is Glutamate--tRNA ligase from Pseudoalteromonas translucida (strain TAC 125).